The primary structure comprises 114 residues: Endoribonuclease MazF2 (114 aa).

It belongs to the PemK/MazF family. As to quaternary structure, probably forms a complex with cognate antitoxin MazE2.

Its function is as follows. Toxic component of a type II toxin-antitoxin (TA) system. Acts as an endoribonuclease on single-strand RNA, cleaving between the second and third bases in the sequences CUCCU and UUCCU. Neutralized by coexpression with cognate antitoxin MazE2. This is Endoribonuclease MazF2 (mazF2) from Mycobacterium bovis (strain ATCC BAA-935 / AF2122/97).